The following is a 241-amino-acid chain: 2-C-methyl-D-erythritol 4-phosphate cytidylyltransferase (241 aa).

The protein belongs to the IspD/TarI cytidylyltransferase family. IspD subfamily.

It carries out the reaction 2-C-methyl-D-erythritol 4-phosphate + CTP + H(+) = 4-CDP-2-C-methyl-D-erythritol + diphosphate. Its pathway is isoprenoid biosynthesis; isopentenyl diphosphate biosynthesis via DXP pathway; isopentenyl diphosphate from 1-deoxy-D-xylulose 5-phosphate: step 2/6. In terms of biological role, catalyzes the formation of 4-diphosphocytidyl-2-C-methyl-D-erythritol from CTP and 2-C-methyl-D-erythritol 4-phosphate (MEP). The sequence is that of 2-C-methyl-D-erythritol 4-phosphate cytidylyltransferase from Baumannia cicadellinicola subsp. Homalodisca coagulata.